Here is a 135-residue protein sequence, read N- to C-terminus: Ribosome-binding factor A (135 aa).

This sequence belongs to the RbfA family. Monomer. Binds 30S ribosomal subunits, but not 50S ribosomal subunits or 70S ribosomes.

The protein resides in the cytoplasm. Its function is as follows. One of several proteins that assist in the late maturation steps of the functional core of the 30S ribosomal subunit. Associates with free 30S ribosomal subunits (but not with 30S subunits that are part of 70S ribosomes or polysomes). Required for efficient processing of 16S rRNA. May interact with the 5'-terminal helix region of 16S rRNA. The protein is Ribosome-binding factor A of Rhizobium meliloti (strain 1021) (Ensifer meliloti).